The sequence spans 157 residues: Transcriptional repressor NrdR (157 aa).

Positions 1–21 are disordered; the sequence is MKCPNCHKNGSRVVDSRPADN. The segment at 3-34 is a zinc-finger region; it reads CPNCHKNGSRVVDSRPADNGHAIRRRRECEQC. The ATP-cone domain occupies 49-139; sequence LLVIKKNGTR…VYREFKDMHA (91 aa).

It belongs to the NrdR family. Zn(2+) is required as a cofactor.

In terms of biological role, negatively regulates transcription of bacterial ribonucleotide reductase nrd genes and operons by binding to NrdR-boxes. This Ligilactobacillus salivarius (strain UCC118) (Lactobacillus salivarius) protein is Transcriptional repressor NrdR.